The following is a 296-amino-acid chain: N-acetylmuramic acid 6-phosphate etherase (296 aa).

In terms of domain architecture, SIS spans 54 to 217 (VTESFRKGGR…STTSMVGIGK (164 aa)). Glu82 (proton donor) is an active-site residue. Residue Glu113 is part of the active site.

It belongs to the GCKR-like family. MurNAc-6-P etherase subfamily. Homodimer.

It catalyses the reaction N-acetyl-D-muramate 6-phosphate + H2O = N-acetyl-D-glucosamine 6-phosphate + (R)-lactate. Its pathway is amino-sugar metabolism; N-acetylmuramate degradation. Its function is as follows. Specifically catalyzes the cleavage of the D-lactyl ether substituent of MurNAc 6-phosphate, producing GlcNAc 6-phosphate and D-lactate. This chain is N-acetylmuramic acid 6-phosphate etherase, found in Listeria welshimeri serovar 6b (strain ATCC 35897 / DSM 20650 / CCUG 15529 / CIP 8149 / NCTC 11857 / SLCC 5334 / V8).